We begin with the raw amino-acid sequence, 782 residues long: Protein phosphatase 1 regulatory subunit 12C (782 aa).

Residues 1 to 17 (MSGEDGPAAGPGAAAAA) are compositionally biased toward low complexity. The tract at residues 1 to 43 (MSGEDGPAAGPGAAAAAARERRREQLRQWGARAGAEPGPGERR) is disordered. Position 2 is an N-acetylserine (serine 2). ANK repeat units follow at residues 100–129 (DGISALHQACIDENLEVVRFLVEQGATVNQ), 133–162 (EGWTPLHVAASCGYLDIARYLLSHGANIAA), 226–255 (TGASALHVAAAKGYIEVMRLLLQAGYDPEL), and 259–288 (DGWTPLHAAAHWGVEDACRLLAEHGGGMDS). Residues 297 to 329 (CDLADEEVLSLLEELARKQEDLRNQKEASQSRG) adopt a coiled-coil conformation. The tract at residues 316 to 686 (EDLRNQKEAS…EEPDGGFRTL (371 aa)) is disordered. The segment covering 323–337 (EASQSRGQEPQAPSS) has biased composition (polar residues). Residues 349–365 (SSREKISLQDLSKERRP) are compositionally biased toward basic and acidic residues. Positions 374–383 (QDEDEGEEGP) are enriched in acidic residues. A phosphoserine mark is found at serine 399, serine 407, serine 427, serine 452, and serine 509. Residues 449–463 (RSASSSWLEGTSTQA) show a composition bias toward polar residues. Residues 537 to 546 (VRDEESESQR) are compositionally biased toward basic and acidic residues. Over residues 547 to 557 (KARSRLMRQSR) the composition is skewed to basic residues. Residue threonine 560 is modified to Phosphothreonine; by CDC42BP and ROCK2. Residues 567 to 583 (DLKEAEKAAGKAPESEK) show a composition bias toward basic and acidic residues. Phosphoserine occurs at positions 604 and 647. A compositionally biased stretch (acidic residues) spans 670-680 (PEPEPESEEPD). A coiled-coil region spans residues 681–782 (GGFRTLYAEL…LIRVISKLSK (102 aa)).

PP1 comprises a catalytic subunit, PPP1CA, PPP1CB or PPP1CC, and one or several targeting or regulatory subunits. PPP1R12C mediates binding to myosin. Interacts via its N-terminus with PPP1CB. Interacts with IL16. Interacts with the coiled-coil domain of MPRIP. Interacts with NOD2. Phosphorylation at Thr-560 is essential for its interaction with PPP1CB. As to expression, ubiquitously expressed. Highly expressed in heart.

It is found in the cytoplasm. It localises to the cytoskeleton. The protein resides in the stress fiber. In terms of biological role, regulates myosin phosphatase activity. The chain is Protein phosphatase 1 regulatory subunit 12C from Homo sapiens (Human).